The following is a 1279-amino-acid chain: ATP-dependent helicase/nuclease subunit A (1279 aa).

Positions 4-499 (TKWTDEQRQA…VKLFKNFRSR (496 aa)) constitute a UvrD-like helicase ATP-binding domain. 25-32 (AGAGAGKT) contacts ATP. The region spanning 526 to 853 (EEALKVGASY…RIMSIHKSKG (328 aa)) is the UvrD-like helicase C-terminal domain.

This sequence belongs to the helicase family. AddA subfamily. In terms of assembly, heterodimer of AddA and AddB/RexB. Requires Mg(2+) as cofactor.

It carries out the reaction Couples ATP hydrolysis with the unwinding of duplex DNA by translocating in the 3'-5' direction.. The enzyme catalyses ATP + H2O = ADP + phosphate + H(+). Its function is as follows. The heterodimer acts as both an ATP-dependent DNA helicase and an ATP-dependent, dual-direction single-stranded exonuclease. Recognizes the chi site generating a DNA molecule suitable for the initiation of homologous recombination. The AddA nuclease domain is required for chi fragment generation; this subunit has the helicase and 3' -&gt; 5' nuclease activities. The protein is ATP-dependent helicase/nuclease subunit A of Clostridium botulinum (strain Kyoto / Type A2).